We begin with the raw amino-acid sequence, 270 residues long: Probable ribosomal RNA small subunit methyltransferase A (270 aa).

S-adenosyl-L-methionine is bound by residues histidine 19, leucine 21, glycine 46, glutamate 67, aspartate 92, and asparagine 107.

Belongs to the class I-like SAM-binding methyltransferase superfamily. rRNA adenine N(6)-methyltransferase family. RsmA subfamily.

It is found in the cytoplasm. Specifically dimethylates two adjacent adenosines in the loop of a conserved hairpin near the 3'-end of 16S rRNA in the 30S particle. May play a critical role in biogenesis of 30S subunits. This is Probable ribosomal RNA small subunit methyltransferase A from Methanococcoides burtonii (strain DSM 6242 / NBRC 107633 / OCM 468 / ACE-M).